The following is a 430-amino-acid chain: Enolase (430 aa).

Gln165 is a binding site for (2R)-2-phosphoglycerate. Catalysis depends on Glu207, which acts as the Proton donor. Positions 244, 287, and 314 each coordinate Mg(2+). (2R)-2-phosphoglycerate contacts are provided by Lys339, Arg368, Ser369, and Lys390. Lys339 (proton acceptor) is an active-site residue.

It belongs to the enolase family. As to quaternary structure, component of the RNA degradosome, a multiprotein complex involved in RNA processing and mRNA degradation. Requires Mg(2+) as cofactor.

The protein resides in the cytoplasm. It is found in the secreted. It localises to the cell surface. It carries out the reaction (2R)-2-phosphoglycerate = phosphoenolpyruvate + H2O. It functions in the pathway carbohydrate degradation; glycolysis; pyruvate from D-glyceraldehyde 3-phosphate: step 4/5. Its function is as follows. Catalyzes the reversible conversion of 2-phosphoglycerate (2-PG) into phosphoenolpyruvate (PEP). It is essential for the degradation of carbohydrates via glycolysis. This is Enolase from Xylella fastidiosa (strain M23).